Consider the following 201-residue polypeptide: MKTLFFATTNENKINEVKNILDMPNLNLVVPKNFNIKETGTTFKENSLLKAKALFAILNKNQNVFGEDSGLCIEALNLEPGIYSKRYDTYKLCKKLSTNEKNQLILDLMKNEKNRKAYFICNISYISKDRQILNFEGIIKGEIALSLNDDKNYGFGYDSIFLTKNNKKLSDLTLEEKNKISHRGIAFSKFKKFLLKSLFNN.

8–13 is a binding site for substrate; that stretch reads TTNENK. The Proton acceptor role is filled by aspartate 68. Residue aspartate 68 coordinates Mg(2+). Substrate contacts are provided by residues serine 69, 155–158, lysine 177, and 182–183; these read FGYD and HR.

It belongs to the HAM1 NTPase family. Homodimer. Mg(2+) is required as a cofactor.

It carries out the reaction XTP + H2O = XMP + diphosphate + H(+). The catalysed reaction is dITP + H2O = dIMP + diphosphate + H(+). It catalyses the reaction ITP + H2O = IMP + diphosphate + H(+). Functionally, pyrophosphatase that catalyzes the hydrolysis of nucleoside triphosphates to their monophosphate derivatives, with a high preference for the non-canonical purine nucleotides XTP (xanthosine triphosphate), dITP (deoxyinosine triphosphate) and ITP. Seems to function as a house-cleaning enzyme that removes non-canonical purine nucleotides from the nucleotide pool, thus preventing their incorporation into DNA/RNA and avoiding chromosomal lesions. This is dITP/XTP pyrophosphatase from Borrelia garinii subsp. bavariensis (strain ATCC BAA-2496 / DSM 23469 / PBi) (Borreliella bavariensis).